Consider the following 572-residue polypeptide: Oxygen-dependent choline dehydrogenase (572 aa).

An FAD-binding site is contributed by 9 to 38 (DYVIIGGGSAGSVLGARLSEDKDKNVLVLE). The Proton acceptor role is filled by His-477.

The protein belongs to the GMC oxidoreductase family. The cofactor is FAD.

The enzyme catalyses choline + A = betaine aldehyde + AH2. It catalyses the reaction betaine aldehyde + NAD(+) + H2O = glycine betaine + NADH + 2 H(+). It participates in amine and polyamine biosynthesis; betaine biosynthesis via choline pathway; betaine aldehyde from choline (cytochrome c reductase route): step 1/1. Involved in the biosynthesis of the osmoprotectant glycine betaine. Catalyzes the oxidation of choline to betaine aldehyde and betaine aldehyde to glycine betaine at the same rate. The sequence is that of Oxygen-dependent choline dehydrogenase from Staphylococcus epidermidis (strain ATCC 12228 / FDA PCI 1200).